The primary structure comprises 424 residues: Glutamate-1-semialdehyde 2,1-aminomutase (424 aa).

An N6-(pyridoxal phosphate)lysine modification is found at Lys263.

Belongs to the class-III pyridoxal-phosphate-dependent aminotransferase family. HemL subfamily. Homodimer. Pyridoxal 5'-phosphate is required as a cofactor.

Its subcellular location is the cytoplasm. It carries out the reaction (S)-4-amino-5-oxopentanoate = 5-aminolevulinate. The protein operates within porphyrin-containing compound metabolism; protoporphyrin-IX biosynthesis; 5-aminolevulinate from L-glutamyl-tRNA(Glu): step 2/2. In Campylobacter jejuni subsp. jejuni serotype O:2 (strain ATCC 700819 / NCTC 11168), this protein is Glutamate-1-semialdehyde 2,1-aminomutase.